A 440-amino-acid polypeptide reads, in one-letter code: Glycerophosphocholine cholinephosphodiesterase ENPP6 (440 aa).

Positions 1-22 are cleaved as a signal peptide; it reads MAGKLWTFLLLFGFSWVWPASA. The substrate site is built by D32, S71, and N92. The Zn(2+) site is built by D32 and S71. S71 functions as the Nucleophile in the catalytic mechanism. Position 71 is a phosphoserine (S71). 2 N-linked (GlcNAc...) asparagine glycosylation sites follow: N100 and N118. C142 and C154 are joined by a disulfide. D193 provides a ligand contact to substrate. Zn(2+) is bound by residues D193, H197, D240, and H241. Residue H241 coordinates substrate. Residue N341 is glycosylated (N-linked (GlcNAc...) asparagine). H354 contributes to the substrate binding site. H354 contributes to the Zn(2+) binding site. The N-linked (GlcNAc...) asparagine glycan is linked to N404. S419 carries the GPI-anchor amidated serine lipid modification. A propeptide spans 420–440 (removed in mature form); sequence SSPSIPPNSCALVLILLLYFV.

The protein belongs to the nucleotide pyrophosphatase/phosphodiesterase family. In terms of assembly, homodimer; disulfide-linked. Homotetramer. Zn(2+) is required as a cofactor.

It localises to the cell membrane. It catalyses the reaction sn-glycerol 3-phosphocholine + H2O = phosphocholine + glycerol + H(+). The enzyme catalyses a 1-acyl-sn-glycero-3-phosphocholine + H2O = a 1-acyl-sn-glycerol + phosphocholine + H(+). The catalysed reaction is a 1-O-alkyl-sn-glycero-3-phosphocholine + H2O = a 1-O-alkyl-sn-glycerol + phosphocholine + H(+). It carries out the reaction 1-dodecanoyl-sn-glycero-3-phosphocholine + H2O = 1-dodecanoyl-sn-glycerol + phosphocholine + H(+). It catalyses the reaction 1-hexadecanoyl-sn-glycero-3-phosphocholine + H2O = 1-hexadecanoyl-sn-glycerol + phosphocholine + H(+). The enzyme catalyses 1-(5Z,8Z,11Z,14Z-eicosatetraenoyl)-sn-glycero-3-phosphocholine + H2O = 1-(5Z,8Z,11Z,14Z-eicosatetraenoyl)-sn-glycerol + phosphocholine + H(+). The catalysed reaction is 1-tetradecanoyl-sn-glycero-3-phosphocholine + H2O = 1-tetradecanoyl-sn-glycerol + phosphocholine + H(+). It carries out the reaction sphing-4-enine-phosphocholine + H2O = sphing-4-enine + phosphocholine + H(+). It catalyses the reaction 1-(9Z-octadecenoyl)-sn-glycero-3-phosphocholine + H2O = 1-(9Z-octadecenoyl)-sn-glycerol + phosphocholine + H(+). The enzyme catalyses 1-(9Z,12Z)-octadecadienoyl-sn-glycero-3-phosphocholine + H2O = 1-(9Z,12Z-octadecadienoyl)-sn-glycerol + phosphocholine + H(+). The catalysed reaction is glycero-2-phosphocholine + H2O = phosphocholine + glycerol + H(+). Its activity is regulated as follows. Inhibited by EDTA and EGTA in vitro. Its function is as follows. Choline-specific glycerophosphodiesterase that hydrolyzes glycerophosphocholine (GPC) and lysophosphatidylcholine (LPC) and contributes to supplying choline to the cells. Has a preference for LPC with short (12:0 and 14:0) or polyunsaturated (18:2 and 20:4) fatty acids. In vitro, hydrolyzes only choline-containing lysophospholipids, such as sphingosylphosphorylcholine (SPC), platelet-activating factor (PAF) and lysoPAF, but not other lysophospholipids. The chain is Glycerophosphocholine cholinephosphodiesterase ENPP6 from Rattus norvegicus (Rat).